Consider the following 401-residue polypeptide: MQLKALEVREITDYIKKMMDNDIILRNVRVKGEISNLKYHSTGIYFTLKDEIASLKCVMFNEYGKLLNFTLQDGMSVIVTGRISVYERNGTYQLYAQSIQSDGIGALYFAFNKLKEKLQKEGLFDSDKKKPIPKHPKKIAVVTSPTGAVIRDIITISRRRNPTVDILVVPVLVQGSSAADEICNALRILNKREDIDVIILARGGGSLEEIWPFNEEKVARCIYASRIPVVSAVGHETDFTISDFVADLRAPTPSAAAEIVVPDIKVYQRELFLLKTKLLTLMTAELNRKKKEFEGLKRALYLNSPTKKSEILRHKVENLTASLYNEMLSIYQHKRNDFLILAEKLNSLSPLKVLTRGYTIVLDKQEKVISSVKDIKPYDEIKILFKDGKAKAIVQEVKENE.

Belongs to the XseA family. In terms of assembly, heterooligomer composed of large and small subunits.

The protein resides in the cytoplasm. The catalysed reaction is Exonucleolytic cleavage in either 5'- to 3'- or 3'- to 5'-direction to yield nucleoside 5'-phosphates.. Functionally, bidirectionally degrades single-stranded DNA into large acid-insoluble oligonucleotides, which are then degraded further into small acid-soluble oligonucleotides. This chain is Exodeoxyribonuclease 7 large subunit, found in Thermoanaerobacter pseudethanolicus (strain ATCC 33223 / 39E) (Clostridium thermohydrosulfuricum).